The chain runs to 366 residues: Galactoside alpha-(1,2)-fucosyltransferase 1 (366 aa).

The Cytoplasmic portion of the chain corresponds to 1–8 (MWPRSHRH). Residues 9–25 (LCLAFLLVCVLSAISFL) traverse the membrane as a helical; Signal-anchor for type II membrane protein segment. The Lumenal portion of the chain corresponds to 26–366 (IHFHQDSIRH…LSPLWPLAEP (341 aa)). N-linked (GlcNAc...) asparagine glycosylation is found at Asn66, Asn302, and Asn328.

This sequence belongs to the glycosyltransferase 11 family.

Its subcellular location is the golgi apparatus. The protein localises to the golgi stack membrane. The catalysed reaction is a beta-D-galactosyl-(1-&gt;4)-N-acetyl-beta-D-glucosaminyl derivative + GDP-beta-L-fucose = an alpha-L-Fuc-(1-&gt;2)-beta-D-Gal-(1-&gt;4)-beta-D-GlcNAc derivative + GDP + H(+). It catalyses the reaction a ganglioside GA1 + GDP-beta-L-fucose = a ganglioside Fuc-GA1 + GDP + H(+). The enzyme catalyses a beta-D-Gal-(1-&gt;3)-beta-D-GlcNAc-(1-&gt;3)-beta-D-Gal-(1-&gt;4)-beta-D-Glc-(1&lt;-&gt;1')-Cer(d18:1(4E)) + GDP-beta-L-fucose = alpha-L-fucosyl-(1-&gt;2)- beta-D-galactosyl-(1-&gt;3)-N-acetyl-beta-D-glucosaminyl-(1-&gt;3)-beta-D-galactosyl-(1-&gt;4)-beta-D-glucosyl-(1&lt;-&gt;1')-N-acylsphing-4-enine + GDP + H(+). It carries out the reaction a neolactoside nLc4Cer(d18:1(4E)) + GDP-beta-L-fucose = a neolactoside IV(2)-alpha-Fuc-nLc4Cer(d18:1(4E)) + GDP + H(+). The catalysed reaction is a ganglioside GM1 + GDP-beta-L-fucose = a ganglioside Fuc-GM1 + GDP + H(+). It catalyses the reaction beta-D-galactosyl-(1-&gt;3)-N-acetyl-D-galactosamine + GDP-beta-L-fucose = alpha-L-fucosyl-(1-&gt;2)-beta-D-galactosyl-(1-&gt;3)-N-acetyl-D-galactosamine + GDP + H(+). It functions in the pathway protein modification; protein glycosylation. In terms of biological role, catalyzes the transfer of L-fucose, from a guanosine diphosphate-beta-L-fucose, to the terminal galactose residue of glycoconjugates through an alpha(1,2) linkage leading to H antigen synthesis that is an intermediate substrate in the synthesis of ABO blood group antigens. H antigen is essential for maturation of the glomerular layer of the main olfactory bulb, in cell migration and early cell-cell contacts during tumor associated angiogenesis. Preferentially fucosylates soluble lactose and to a lesser extent fucosylates glycolipids gangliosides GA1 and GM1a. The sequence is that of Galactoside alpha-(1,2)-fucosyltransferase 1 from Saimiri boliviensis boliviensis (Bolivian squirrel monkey).